A 221-amino-acid polypeptide reads, in one-letter code: Intraflagellar transport-associated protein (221 aa).

At S59 the chain carries Phosphoserine.

In terms of assembly, interacts with IFT122; the interaction associates IFTAP with IFT-A complex.

Functionally, seems to play a role in ciliary BBSome localization, maybe through interaction with IFT-A complex. The protein is Intraflagellar transport-associated protein of Homo sapiens (Human).